A 244-amino-acid polypeptide reads, in one-letter code: Myosin-7 (244 aa).

The tract at residues 1–244 is rodlike tail (S2 and LMM domains); that stretch reads VEQTERSRKL…DIGTKGLNEE (244 aa). Residues 1-244 are a coiled coil; the sequence is VEQTERSRKL…DIGTKGLNEE (244 aa). The disordered stretch occupies residues 216–244; it reads EERADIAESQVNKLRAKSRDIGTKGLNEE. A compositionally biased stretch (basic and acidic residues) spans 232-244; it reads KSRDIGTKGLNEE.

Muscle myosin is a hexameric protein that consists of 2 heavy chain subunits (MHC), 2 alkali light chain subunits (MLC) and 2 regulatory light chain subunits (MLC-2). Interacts with ECPAS. Interacts (via C-terminus) with LRRC39.

The protein resides in the cytoplasm. The protein localises to the myofibril. Its subcellular location is the sarcomere. In terms of biological role, myosins are actin-based motor molecules with ATPase activity essential for muscle contraction. Forms regular bipolar thick filaments that, together with actin thin filaments, constitute the fundamental contractile unit of skeletal and cardiac muscle. The sequence is that of Myosin-7 (MYH7) from Papio hamadryas (Hamadryas baboon).